Here is a 223-residue protein sequence, read N- to C-terminus: Probable chemoreceptor glutamine deamidase CheD (223 aa).

Positions 189 to 223 (QTASAKAHTPPQIERFSAPAKPRFERFTRPSTATS) are disordered.

It belongs to the CheD family.

The catalysed reaction is L-glutaminyl-[protein] + H2O = L-glutamyl-[protein] + NH4(+). In terms of biological role, probably deamidates glutamine residues to glutamate on methyl-accepting chemotaxis receptors (MCPs), playing an important role in chemotaxis. The sequence is that of Probable chemoreceptor glutamine deamidase CheD from Bordetella petrii (strain ATCC BAA-461 / DSM 12804 / CCUG 43448).